Here is a 20-residue protein sequence, read N- to C-terminus: Succinate--CoA ligase [ADP-forming] subunit beta, mitochondrial (20 aa).

Positions 8-20 (SMELLQEAGVSIP) constitute an ATP-grasp domain.

The protein belongs to the succinate/malate CoA ligase beta subunit family. ATP-specific subunit beta subfamily. In terms of assembly, heterodimer of an alpha and a beta subunit. The beta subunit determines specificity for ATP. Interacts with ALAS2.

It localises to the mitochondrion. It carries out the reaction succinate + ATP + CoA = succinyl-CoA + ADP + phosphate. The protein operates within carbohydrate metabolism; tricarboxylic acid cycle; succinate from succinyl-CoA (ligase route): step 1/1. Functionally, ATP-specific succinyl-CoA synthetase functions in the citric acid cycle (TCA), coupling the hydrolysis of succinyl-CoA to the synthesis of ATP and thus represents the only step of substrate-level phosphorylation in the TCA. The beta subunit provides nucleotide specificity of the enzyme and binds the substrate succinate, while the binding sites for coenzyme A and phosphate are found in the alpha subunit. In Canis lupus familiaris (Dog), this protein is Succinate--CoA ligase [ADP-forming] subunit beta, mitochondrial.